We begin with the raw amino-acid sequence, 150 residues long: Cytochrome c oxidase subunit 5A, mitochondrial (150 aa).

The transit peptide at 1–41 (MLGAALRRCAVAATTWAGPRGLLHSSRTPGPAAAIQSVRCY) directs the protein to the mitochondrion. Residues 2–17 (LGAALRRCAVAATTWA) carry the SIFI-degron motif. Residues lysine 87 and lysine 113 each carry the N6-acetyllysine modification. Threonine 141 carries the post-translational modification Phosphothreonine.

It belongs to the cytochrome c oxidase subunit 5A family. As to quaternary structure, component of the cytochrome c oxidase (complex IV, CIV), a multisubunit enzyme composed of 14 subunits. The complex is composed of a catalytic core of 3 subunits MT-CO1, MT-CO2 and MT-CO3, encoded in the mitochondrial DNA, and 11 supernumerary subunits COX4I, COX5A, COX5B, COX6A, COX6B, COX6C, COX7A, COX7B, COX7C, COX8 and NDUFA4, which are encoded in the nuclear genome. The complex exists as a monomer or a dimer and forms supercomplexes (SCs) in the inner mitochondrial membrane with NADH-ubiquinone oxidoreductase (complex I, CI) and ubiquinol-cytochrome c oxidoreductase (cytochrome b-c1 complex, complex III, CIII), resulting in different assemblies (supercomplex SCI(1)III(2)IV(1) and megacomplex MCI(2)III(2)IV(2)). Interacts with AFG1L. Interacts with RAB5IF. In response to mitochondrial stress, the precursor protein is ubiquitinated by the SIFI complex in the cytoplasm before mitochondrial import, leading to its degradation. Within the SIFI complex, UBR4 initiates ubiquitin chain that are further elongated or branched by KCMF1.

It is found in the mitochondrion inner membrane. It functions in the pathway energy metabolism; oxidative phosphorylation. Component of the cytochrome c oxidase, the last enzyme in the mitochondrial electron transport chain which drives oxidative phosphorylation. The respiratory chain contains 3 multisubunit complexes succinate dehydrogenase (complex II, CII), ubiquinol-cytochrome c oxidoreductase (cytochrome b-c1 complex, complex III, CIII) and cytochrome c oxidase (complex IV, CIV), that cooperate to transfer electrons derived from NADH and succinate to molecular oxygen, creating an electrochemical gradient over the inner membrane that drives transmembrane transport and the ATP synthase. Cytochrome c oxidase is the component of the respiratory chain that catalyzes the reduction of oxygen to water. Electrons originating from reduced cytochrome c in the intermembrane space (IMS) are transferred via the dinuclear copper A center (CU(A)) of subunit 2 and heme A of subunit 1 to the active site in subunit 1, a binuclear center (BNC) formed by heme A3 and copper B (CU(B)). The BNC reduces molecular oxygen to 2 water molecules using 4 electrons from cytochrome c in the IMS and 4 protons from the mitochondrial matrix. In Colobus guereza (Mantled guereza), this protein is Cytochrome c oxidase subunit 5A, mitochondrial (COX5A).